Reading from the N-terminus, the 589-residue chain is Arginine--tRNA ligase (589 aa).

The 'HIGH' region signature appears at 132–142 (PNTNKPLHVGH).

It belongs to the class-I aminoacyl-tRNA synthetase family. As to quaternary structure, monomer.

Its subcellular location is the cytoplasm. It carries out the reaction tRNA(Arg) + L-arginine + ATP = L-arginyl-tRNA(Arg) + AMP + diphosphate. The polypeptide is Arginine--tRNA ligase (Treponema pallidum subsp. pallidum (strain SS14)).